The sequence spans 78 residues: uncharacterized protein (78 aa).

The next 2 helical transmembrane spans lie at 13–35 and 50–72; these read AGVGCVLMLMIIALVVFMLPTGI and GTTFGILMLAALPPLTGAIFYYF.

It is found in the cell membrane. This is an uncharacterized protein from Pasteurella multocida (strain Pm70).